The following is a 656-amino-acid chain: Replication protein A 70 kDa DNA-binding subunit A (656 aa).

The OB DNA-binding region spans 225–307 (AIKARVTAKG…NHLNNEWEIL (83 aa)). Residues 516–542 (CPNMIGDRQCNKKVTKSTNGNWTCDKC) form a C4-type zinc finger.

The protein belongs to the replication factor A protein 1 family. As to quaternary structure, heterotrimer of RPA1, RPA2 and RPA3 (canonical replication protein A complex). Interacts with RPA2B. In terms of tissue distribution, expressed in root tips, roots, shoot apical meristem (SAM), young leaves, flag leaves and ears, and at lower levels in mature leaves.

The protein localises to the nucleus. Functionally, component of the replication protein A complex (RPA) required for DNA recombination, repair and replication. The activity of RPA is mediated by single-stranded DNA binding and protein interactions. Plays an essential role in meiotic and somatic DNA repair, but is dispensable for DNA replication and homologous recombination. Is essential for normal progression through meiosis in pollen mother cells. Is involved in repair of double-strand DNA breaks (DSBs) induced by genotoxic stresses. This chain is Replication protein A 70 kDa DNA-binding subunit A (RPA1A), found in Oryza sativa subsp. japonica (Rice).